The following is a 340-amino-acid chain: Ornithine carbamoyltransferase (340 aa).

Carbamoyl phosphate is bound by residues 57-60 (STRT), Gln-84, Arg-108, and 135-138 (HPTQ). Residues Asn-167, Asp-231, and 235-236 (SM) contribute to the L-ornithine site. Carbamoyl phosphate is bound by residues 272–273 (CL) and Arg-317.

This sequence belongs to the aspartate/ornithine carbamoyltransferase superfamily. OTCase family.

Its subcellular location is the cytoplasm. It carries out the reaction carbamoyl phosphate + L-ornithine = L-citrulline + phosphate + H(+). It participates in amino-acid biosynthesis; L-arginine biosynthesis; L-arginine from L-ornithine and carbamoyl phosphate: step 1/3. Reversibly catalyzes the transfer of the carbamoyl group from carbamoyl phosphate (CP) to the N(epsilon) atom of ornithine (ORN) to produce L-citrulline. The polypeptide is Ornithine carbamoyltransferase (argF) (Lactiplantibacillus plantarum (strain ATCC BAA-793 / NCIMB 8826 / WCFS1) (Lactobacillus plantarum)).